Consider the following 365-residue polypeptide: 2-aminoethylphosphonate--pyruvate transaminase (365 aa).

Lysine 194 carries the post-translational modification N6-(pyridoxal phosphate)lysine.

It belongs to the class-V pyridoxal-phosphate-dependent aminotransferase family. PhnW subfamily. Homodimer. The cofactor is pyridoxal 5'-phosphate.

The catalysed reaction is (2-aminoethyl)phosphonate + pyruvate = phosphonoacetaldehyde + L-alanine. In terms of biological role, involved in phosphonate degradation. The polypeptide is 2-aminoethylphosphonate--pyruvate transaminase (Bacillus cereus (strain Q1)).